The following is a 249-amino-acid chain: 3alpha-hydroxy bile acid-CoA-ester 3-dehydrogenase 2 (249 aa).

NAD(+) contacts are provided by residues 15–18 (TRGI), E38, E42, and N92. Residue S144 coordinates substrate. Catalysis depends on proton donor/acceptor residues Y157 and K161. NAD(+) contacts are provided by residues K161 and 190–192 (VNT).

Belongs to the short-chain dehydrogenases/reductases (SDR) family. In terms of assembly, homotetramer.

It carries out the reaction a 3alpha-hydroxy bile acid CoA + NAD(+) = a 3-oxo bile acid CoA + NADH + H(+). The enzyme catalyses choloyl-CoA + NAD(+) = 7alpha,12alpha-dihydroxy-3-oxochol-24-oyl-CoA + NADH + H(+). It catalyses the reaction chenodeoxycholoyl-CoA + NAD(+) = 7alpha-hydroxy-3-oxochol-24-oyl-CoA + NADH + H(+). The catalysed reaction is deoxycholoyl-CoA + NAD(+) = 12alpha-hydroxy-3-oxocholan-24-oyl-CoA + NADH + H(+). It carries out the reaction lithocholoyl-CoA + NAD(+) = 3-oxocholan-24-oyl-CoA + NADH + H(+). It functions in the pathway lipid metabolism; bile acid biosynthesis. Involved in the multi-step bile acid 7alpha-dehydroxylation pathway that transforms primary bile acids to secondary bile acids in the human gut. Catalyzes the oxidation of C3-hydroxyl group of CoA conjugated bile acids generating a C3-oxo bile acid intermediate. Can use choloyl-CoA, chenodeoxycholoyl-CoA, deoxycholoyl-CoA, and lithocholoyl-CoA as substrates with similar efficiency. Highly prefers NAD over NADP as cosubstrate. Also catalyzes the reverse reactions; in vitro, the preferred direction of reaction depends on the pH. Has very little activity with unconjugated (non-CoA) bile acid substrates. This is 3alpha-hydroxy bile acid-CoA-ester 3-dehydrogenase 2 (baiA2) from Clostridium scindens (strain JCM 10418 / VPI 12708).